Consider the following 430-residue polypeptide: Enolase (430 aa).

Gln-165 is a (2R)-2-phosphoglycerate binding site. Glu-207 serves as the catalytic Proton donor. Mg(2+) is bound by residues Asp-244, Glu-287, and Asp-314. Positions 339, 368, 369, and 390 each coordinate (2R)-2-phosphoglycerate. Residue Lys-339 is the Proton acceptor of the active site.

It belongs to the enolase family. In terms of assembly, component of the RNA degradosome, a multiprotein complex involved in RNA processing and mRNA degradation. Requires Mg(2+) as cofactor.

It localises to the cytoplasm. The protein resides in the secreted. Its subcellular location is the cell surface. The catalysed reaction is (2R)-2-phosphoglycerate = phosphoenolpyruvate + H2O. It participates in carbohydrate degradation; glycolysis; pyruvate from D-glyceraldehyde 3-phosphate: step 4/5. Functionally, catalyzes the reversible conversion of 2-phosphoglycerate (2-PG) into phosphoenolpyruvate (PEP). It is essential for the degradation of carbohydrates via glycolysis. The polypeptide is Enolase (Xanthomonas campestris pv. campestris (strain 8004)).